Consider the following 122-residue polypeptide: Large ribosomal subunit protein uL14c (122 aa).

This sequence belongs to the universal ribosomal protein uL14 family. In terms of assembly, part of the 50S ribosomal subunit.

Its subcellular location is the plastid. It localises to the chloroplast. Binds to 23S rRNA. The polypeptide is Large ribosomal subunit protein uL14c (Chaetosphaeridium globosum (Charophycean green alga)).